Consider the following 166-residue polypeptide: Large ribosomal subunit protein uL10 (166 aa).

It belongs to the universal ribosomal protein uL10 family. Part of the ribosomal stalk of the 50S ribosomal subunit. The N-terminus interacts with L11 and the large rRNA to form the base of the stalk. The C-terminus forms an elongated spine to which L12 dimers bind in a sequential fashion forming a multimeric L10(L12)X complex.

Forms part of the ribosomal stalk, playing a central role in the interaction of the ribosome with GTP-bound translation factors. This Shewanella sediminis (strain HAW-EB3) protein is Large ribosomal subunit protein uL10.